The following is a 302-amino-acid chain: Sulfate adenylyltransferase subunit 2 (302 aa).

The protein belongs to the PAPS reductase family. CysD subfamily. As to quaternary structure, heterodimer composed of CysD, the smaller subunit, and CysN.

The enzyme catalyses sulfate + ATP + H(+) = adenosine 5'-phosphosulfate + diphosphate. It participates in sulfur metabolism; hydrogen sulfide biosynthesis; sulfite from sulfate: step 1/3. Its function is as follows. With CysN forms the ATP sulfurylase (ATPS) that catalyzes the adenylation of sulfate producing adenosine 5'-phosphosulfate (APS) and diphosphate, the first enzymatic step in sulfur assimilation pathway. APS synthesis involves the formation of a high-energy phosphoric-sulfuric acid anhydride bond driven by GTP hydrolysis by CysN coupled to ATP hydrolysis by CysD. This Shigella dysenteriae serotype 1 (strain Sd197) protein is Sulfate adenylyltransferase subunit 2.